Here is a 314-residue protein sequence, read N- to C-terminus: Olfactory receptor 5B3 (314 aa).

Over 1-23 the chain is Extracellular; sequence MENKTEVTQFILLGLTNDSELQV. N-linked (GlcNAc...) asparagine glycans are attached at residues Asn3 and Asn17. Residues 24–44 traverse the membrane as a helical segment; sequence PLFITFPFIYIITLVGNLGII. The Cytoplasmic segment spans residues 45-52; the sequence is VLIFWDSC. Residues 53–73 form a helical membrane-spanning segment; it reads LHNPMYFFLSNLSLVDFCYSS. Topologically, residues 74 to 97 are extracellular; the sequence is AVTPIVMAGFLIEDKVISYNACAA. The cysteines at positions 95 and 187 are disulfide-linked. The helical transmembrane segment at 98–118 threads the bilayer; it reads QMYIFVAFATVENYLLASMAY. Residues 119-131 are Cytoplasmic-facing; the sequence is DRYAAVCKPLHYT. Residues 132-152 traverse the membrane as a helical segment; sequence TTMTTTVCARLAIGSYLCGFL. N-linked (GlcNAc...) asparagine glycosylation occurs at Asn153. The Extracellular portion of the chain corresponds to 153-194; sequence NASIHTGDTFSLSFCKSNEVHHFFCDIPAVMVLSCSDRHISE. The helical transmembrane segment at 195 to 215 threads the bilayer; the sequence is LVLIYVVSFNIFIALLVILIS. Over 216–235 the chain is Cytoplasmic; sequence YTFIFITILKMHSASVYQKP. A helical membrane pass occupies residues 236 to 256; the sequence is LSTCASHFIAVGIFYGTIIFM. Topologically, residues 257–269 are extracellular; it reads YLQPSSSHSMDTD. The chain crosses the membrane as a helical span at residues 270-290; it reads KMAPVFYTMVIPMLNPLVYSL. Topologically, residues 291-314 are cytoplasmic; that stretch reads RNKEVKSAFKKVVEKAKLSVGWSV.

This sequence belongs to the G-protein coupled receptor 1 family.

The protein localises to the cell membrane. Its function is as follows. Odorant receptor. This chain is Olfactory receptor 5B3 (OR5B3), found in Homo sapiens (Human).